A 728-amino-acid chain; its full sequence is Catalase-peroxidase (728 aa).

The segment at 1 to 26 (MDNPTDTAGKCPVAHGNKPRGPSNRD) is disordered. The segment at residues 96–218 (WHSAGTYRIT…LGAVQMGLIY (123 aa)) is a cross-link (tryptophyl-tyrosyl-methioninium (Trp-Tyr) (with M-244)). H97 serves as the catalytic Proton acceptor. Residues 218 to 244 (YVNPEGPGGNPDPLASARDIRETFARM) constitute a cross-link (tryptophyl-tyrosyl-methioninium (Tyr-Met) (with W-96)). H259 is a binding site for heme b.

This sequence belongs to the peroxidase family. Peroxidase/catalase subfamily. In terms of assembly, homodimer or homotetramer. It depends on heme b as a cofactor. In terms of processing, formation of the three residue Trp-Tyr-Met cross-link is important for the catalase, but not the peroxidase activity of the enzyme.

It catalyses the reaction H2O2 + AH2 = A + 2 H2O. The enzyme catalyses 2 H2O2 = O2 + 2 H2O. In terms of biological role, bifunctional enzyme with both catalase and broad-spectrum peroxidase activity. This Rhizobium etli (strain CIAT 652) protein is Catalase-peroxidase.